Reading from the N-terminus, the 156-residue chain is Small ribosomal subunit protein uS7 (156 aa).

Belongs to the universal ribosomal protein uS7 family. In terms of assembly, part of the 30S ribosomal subunit. Contacts proteins S9 and S11.

Its function is as follows. One of the primary rRNA binding proteins, it binds directly to 16S rRNA where it nucleates assembly of the head domain of the 30S subunit. Is located at the subunit interface close to the decoding center, probably blocks exit of the E-site tRNA. This is Small ribosomal subunit protein uS7 from Acidobacterium capsulatum (strain ATCC 51196 / DSM 11244 / BCRC 80197 / JCM 7670 / NBRC 15755 / NCIMB 13165 / 161).